The sequence spans 440 residues: 5-methylthioadenosine/S-adenosylhomocysteine deaminase (440 aa).

Zn(2+) contacts are provided by His69 and His71. Substrate-binding residues include Glu98 and His190. Zn(2+) is bound at residue His217. Substrate contacts are provided by Glu220 and Asp305. A Zn(2+)-binding site is contributed by Asp305.

It belongs to the metallo-dependent hydrolases superfamily. MTA/SAH deaminase family. Zn(2+) is required as a cofactor.

The catalysed reaction is S-adenosyl-L-homocysteine + H2O + H(+) = S-inosyl-L-homocysteine + NH4(+). The enzyme catalyses S-methyl-5'-thioadenosine + H2O + H(+) = S-methyl-5'-thioinosine + NH4(+). Its function is as follows. Catalyzes the deamination of 5-methylthioadenosine and S-adenosyl-L-homocysteine into 5-methylthioinosine and S-inosyl-L-homocysteine, respectively. Is also able to deaminate adenosine. This chain is 5-methylthioadenosine/S-adenosylhomocysteine deaminase, found in Desulfovibrio desulfuricans (strain ATCC 27774 / DSM 6949 / MB).